The primary structure comprises 1088 residues: MNTGGRLIAGSHNRNEFVLINADDTARIRSAEELSGQTCKICRDEIELTDNGEPFIACNECAFPTCRPCYEYERREGNQACPQCGTRYKRIKGSPRVEGDEEDDDIDDLEHEFYGMDPEHVTEAALYYMRLNTGRGTDEVSHLYSASPGSEVPLLTYCDEDSDMYSDRHALIVPPSTGLGNRVHHVPFTDSFASIHTRPMVPQKDLTVYGYGSVAWKDRMEVWKKQQIEKLQVVKNERVNDGDGDGFIVDELDDPGLPMMDEGRQPLSRKLPIRSSRINPYRMLIFCRLAILGLFFHYRILHPVNDAFGLWLTSVICEIWFAVSWILDQFPKWYPIERETYLDRLSLRYEKEGKPSELAPVDVFVSTVDPLKEPPLITANTVLSILAVDYPVEKVACYVSDDGAAMLTFEALSYTAEFARKWVPFCKKFSIEPRAPEWYFSQKMDYLKHKVDPAFVMERRAMKRDYEEFKVKINALVSVSQKVPEDGWTMQDGTPWPGNNVRDHPGMIQVFLGHSGVCDMDGNELPRLVYVSREKRPGFDHHKKAGAMNSLIRVSAVLSNAPYLLNVDCDHYINNSKAIREAMCFMMDPQSGKKICYVQFPQRFDGIDRHDRYSNRNVVFFDINMKGLDGIQGPIYVGTGCVFRRQALYGFDAPKKKQPPGRTCNCWPKWCCLCCGMRKKKTGKVKDNQRKKPKETSKQIHALEHIEEGLQVTNAENNSETAQLKLEKKFGQSPVLVASTLLLNGGVPSNVNPASLLRESIQVISCGYEEKTEWGKEIGWIYGSVTEDILTGFKMHCHGWRSVYCMPKRAAFKGSAPINLSDRLHQVLRWALGSVEIFLSRHCPIWYGYGGGLKWLERFSYINSVVYPWTSLPLLVYCSLPAICLLTGKFIVPEISNYAGILFLLMFMSIAVTGILEMQWGKIGIDDWWRNEQFWVIGGVSSHLFALFQGLLKVLAGVSTNFTVTSKAADDGEFSELYIFKWTSLLIPPTTLLIINIVGVIVGVSDAINNGYDSWGPLFGRLFFALWVIVHLYPFLKGLLGKQDRVPTIILVWSILLASILTLLWVRVNPFVSKDGPVLEICGLDCLK.

Met1 bears the N-acetylmethionine mark. Topologically, residues 1-283 are cytoplasmic; that stretch reads MNTGGRLIAG…RSSRINPYRM (283 aa). Zn(2+) is bound by residues Cys39, Cys42, Cys58, Cys61, Cys66, Cys69, Cys81, and Cys84. The RING-type; degenerate zinc-finger motif lies at 39–85; the sequence is CKICRDEIELTDNGEPFIACNECAFPTCRPCYEYERREGNQACPQCG. A helical transmembrane segment spans residues 284-304; the sequence is LIFCRLAILGLFFHYRILHPV. Residues 305-306 lie on the Extracellular side of the membrane; it reads ND. A helical transmembrane segment spans residues 307–327; sequence AFGLWLTSVICEIWFAVSWIL. Residues 328 to 871 lie on the Cytoplasmic side of the membrane; it reads DQFPKWYPIE…INSVVYPWTS (544 aa). Residues Ser366, Lys372, Glu373, Asp402, and Lys543 each coordinate UDP-alpha-D-glucose. Residue Asp402 is part of the active site. Residues Lys544 and Asp568 each contribute to the Mn(2+) site. Residue Asp788 is part of the active site. A helical membrane pass occupies residues 872–892; that stretch reads LPLLVYCSLPAICLLTGKFIV. Over 893–897 the chain is Extracellular; it reads PEISN. The helical transmembrane segment at 898–918 threads the bilayer; the sequence is YAGILFLLMFMSIAVTGILEM. Over 919 to 933 the chain is Cytoplasmic; the sequence is QWGKIGIDDWWRNEQ. The helical transmembrane segment at 934 to 954 threads the bilayer; sequence FWVIGGVSSHLFALFQGLLKV. Over 955 to 983 the chain is Extracellular; sequence LAGVSTNFTVTSKAADDGEFSELYIFKWT. Residue Asn961 is glycosylated (N-linked (GlcNAc...) asparagine). A helical transmembrane segment spans residues 984–1004; that stretch reads SLLIPPTTLLIINIVGVIVGV. At 1005 to 1015 the chain is on the cytoplasmic side; the sequence is SDAINNGYDSW. A helical transmembrane segment spans residues 1016–1036; that stretch reads GPLFGRLFFALWVIVHLYPFL. The Extracellular portion of the chain corresponds to 1037–1045; the sequence is KGLLGKQDR. Residues 1046-1066 traverse the membrane as a helical segment; it reads VPTIILVWSILLASILTLLWV. The Cytoplasmic segment spans residues 1067 to 1088; it reads RVNPFVSKDGPVLEICGLDCLK.

It belongs to the glycosyltransferase 2 family. Plant cellulose synthase subfamily. The cofactor is Mn(2+). Zn(2+) is required as a cofactor. Expressed in young plants, stems and flowers.

It is found in the cell membrane. It carries out the reaction [(1-&gt;4)-beta-D-glucosyl](n) + UDP-alpha-D-glucose = [(1-&gt;4)-beta-D-glucosyl](n+1) + UDP + H(+). It functions in the pathway glycan metabolism; plant cellulose biosynthesis. Functionally, probable catalytic subunit of cellulose synthase terminal complexes ('rosettes'), required for beta-1,4-glucan microfibril crystallization, a major mechanism of the cell wall formation. This Arabidopsis thaliana (Mouse-ear cress) protein is Probable cellulose synthase A catalytic subunit 9 [UDP-forming].